Here is a 581-residue protein sequence, read N- to C-terminus: La-related protein 7 (581 aa).

Residue Met-1 is modified to N-acetylmethionine. Positions 1–10 are enriched in polar residues; that stretch reads METESGNQKN. Disordered stretches follow at residues 1 to 28, 188 to 368, and 410 to 440; these read METESGNQKNVMEEESTEKKKEVEKKKR, NPPE…ERHK, and KSESEMETDGGVPQKTGMKNEKTNSEECPTQ. The HTH La-type RNA-binding domain occupies 28-122; sequence RSRVKQVLAD…KPLGERPKDE (95 aa). One can recognise an RRM domain in the interval 125 to 203; sequence RTVYVELLPK…PRKPGIFPKT (79 aa). Residues 219–228 are compositionally biased toward basic residues; the sequence is KKKKKKKGRM. The span at 229-240 shows a compositional bias: basic and acidic residues; the sequence is KKEDNVQAKEEN. Residue Lys-237 forms a Glycyl lysine isopeptide (Lys-Gly) (interchain with G-Cter in SUMO2) linkage. Phosphothreonine is present on Thr-257. Phosphoserine occurs at positions 258, 261, 273, 298, 299, and 300. Basic and acidic residues predominate over residues 316–335; the sequence is IQKDIIKEPSEASKENRDIE. Phosphoserine is present on Ser-337. Phosphothreonine is present on Thr-338. A Phosphoserine modification is found at Ser-351. The span at 354–367 shows a compositional bias: basic residues; the sequence is KTKRKHKKKHKERH. Lys-410 participates in a covalent cross-link: Glycyl lysine isopeptide (Lys-Gly) (interchain with G-Cter in SUMO2). In terms of domain architecture, xRRM spans 449–562; it reads QFVSGVIVKI…TEKLITKAEK (114 aa).

The protein belongs to the LARP7 family. As to quaternary structure, core component of the 7SK RNP complex, at least composed of 7SK RNA, LARP7, MEPCE, HEXIM1 (or HEXIM2) and P-TEFb (composed of CDK9 and CCNT1/cyclin-T1). Interacts with METTL16. Interacts with RBM7; upon genotoxic stress this interaction is enhanced, triggering the release of inactive P-TEFb complex from the core, yielding to P-TEFb complex activation. Associates with box C/D small nucleolar ribonucleoprotein (snoRNP) complexes.

The protein localises to the nucleus. Its subcellular location is the nucleoplasm. In terms of biological role, RNA-binding protein that specifically binds distinct small nuclear RNA (snRNAs) and regulates their processing and function. Specifically binds the 7SK snRNA (7SK RNA) and acts as a core component of the 7SK ribonucleoprotein (RNP) complex, thereby acting as a negative regulator of transcription elongation by RNA polymerase II. The 7SK RNP complex sequesters the positive transcription elongation factor b (P-TEFb) in a large inactive 7SK RNP complex preventing RNA polymerase II phosphorylation and subsequent transcriptional elongation. The 7SK RNP complex also promotes snRNA gene transcription by RNA polymerase II via interaction with the little elongation complex (LEC). LARP7 specifically binds to the highly conserved 3'-terminal U-rich stretch of 7SK RNA; on stimulation, remains associated with 7SK RNA, whereas P-TEFb is released from the complex. LARP7 also acts as a regulator of mRNA splicing fidelity by promoting U6 snRNA processing. Specifically binds U6 snRNAs and associates with a subset of box C/D RNP complexes: promotes U6 snRNA 2'-O-methylation by facilitating U6 snRNA loading into box C/D RNP complexes. U6 snRNA 2'-O-methylation is required for mRNA splicing fidelity. Binds U6 snRNAs with a 5'-CAGGG-3' sequence motif. U6 snRNA processing is required for spermatogenesis. This Macaca fascicularis (Crab-eating macaque) protein is La-related protein 7.